The primary structure comprises 307 residues: Nucleotide-binding protein Acid345_3782 (307 aa).

31–38 (GLSGSGKA) is an ATP binding site. Residue 81–84 (DIRE) coordinates GTP.

The protein belongs to the RapZ-like family.

Its function is as follows. Displays ATPase and GTPase activities. The sequence is that of Nucleotide-binding protein Acid345_3782 from Koribacter versatilis (strain Ellin345).